We begin with the raw amino-acid sequence, 213 residues long: Uridine kinase (213 aa).

15-22 (GASASGKS) contacts ATP.

Belongs to the uridine kinase family.

Its subcellular location is the cytoplasm. The catalysed reaction is uridine + ATP = UMP + ADP + H(+). It carries out the reaction cytidine + ATP = CMP + ADP + H(+). It functions in the pathway pyrimidine metabolism; CTP biosynthesis via salvage pathway; CTP from cytidine: step 1/3. The protein operates within pyrimidine metabolism; UMP biosynthesis via salvage pathway; UMP from uridine: step 1/1. In Salmonella agona (strain SL483), this protein is Uridine kinase.